The sequence spans 297 residues: MVEVRVPATSANIGPGFDCLGVAVNIYNKFFVEEVEEGIIFEGCADKFKNENNLIYVAMKKCFDKIGYKPTGLRIKIESDIPVSRGLGSSAACVVGGIVSANELAGGALNKKELLDLAVEVEGHPDNVNPAFCGGMTASISDNREVIYSKVKVSEGIKFCALIPDFTLSTEKARAVLPKSIDYKDGIFNVGRTALMISALNNGDFHLIKYACKDKLHQDYRAKLIENFYSIKKQCEKLNSLGVFLSGAGPTIMVMLREEDKDFSKNIKSFLETLKNKWEVRELKIDKLGTVVNNRKL.

82–92 (PVSRGLGSSAA) is an ATP binding site.

It belongs to the GHMP kinase family. Homoserine kinase subfamily.

It is found in the cytoplasm. It catalyses the reaction L-homoserine + ATP = O-phospho-L-homoserine + ADP + H(+). Its pathway is amino-acid biosynthesis; L-threonine biosynthesis; L-threonine from L-aspartate: step 4/5. Catalyzes the ATP-dependent phosphorylation of L-homoserine to L-homoserine phosphate. In Clostridium botulinum (strain Langeland / NCTC 10281 / Type F), this protein is Homoserine kinase.